The sequence spans 371 residues: MYNENPIKRRASTRIYVGDVPIGDGAPIAVQSMTNTLTTDVDATVAQIRALENVGADIVRVSVPTMDAAEAFKLIKQQTNIPLIADIHFDYRIALKVAEYGVDCLRINPGNIGNESRIKSVVECARDKNIPIRIGINGGSLEKDLMDKYKEPTPEALLESAMRHVDILDRLNFDQFKVSVKASDVFLAVEAYRLLAKQIVQPLHLGITEAGGLRSGSVKSSVGLGMLLAEGIGDTLRISLAADPVEEIKVGFDILKSLRIRSRGINFIACPSCSRQEFDVINTVNELERRLEDVITPMDVSIIGCVVNGPGEALVSDIGLTGGNRKSGYFDDGVRQKERFDNDNIVDSLEAKIRAKASIINGRIPVQDLNK.

Residues C270, C273, C305, and E312 each contribute to the [4Fe-4S] cluster site.

It belongs to the IspG family. The cofactor is [4Fe-4S] cluster.

The enzyme catalyses (2E)-4-hydroxy-3-methylbut-2-enyl diphosphate + oxidized [flavodoxin] + H2O + 2 H(+) = 2-C-methyl-D-erythritol 2,4-cyclic diphosphate + reduced [flavodoxin]. It functions in the pathway isoprenoid biosynthesis; isopentenyl diphosphate biosynthesis via DXP pathway; isopentenyl diphosphate from 1-deoxy-D-xylulose 5-phosphate: step 5/6. Converts 2C-methyl-D-erythritol 2,4-cyclodiphosphate (ME-2,4cPP) into 1-hydroxy-2-methyl-2-(E)-butenyl 4-diphosphate. The sequence is that of 4-hydroxy-3-methylbut-2-en-1-yl diphosphate synthase (flavodoxin) from Shewanella woodyi (strain ATCC 51908 / MS32).